Here is a 311-residue protein sequence, read N- to C-terminus: Oxidoreductase NAD-binding domain-containing protein 1 (311 aa).

The signal sequence occupies residues 1–17; sequence MACAAVMIPGLLRCSVG. The FAD-binding FR-type domain maps to 50-186; the sequence is HMERTASVLR…GGVGINPLLS (137 aa). 178–183 is a binding site for NAD(+); it reads GVGINP.

The polypeptide is Oxidoreductase NAD-binding domain-containing protein 1 (OXNAD1) (Pongo abelii (Sumatran orangutan)).